Consider the following 538-residue polypeptide: Putative cysteine ligase BshC (538 aa).

Positions 460-484 form a coiled coil; it reads KINEQIELLERMLKRNVEKKHEVEL.

The protein belongs to the BshC family.

Functionally, involved in bacillithiol (BSH) biosynthesis. May catalyze the last step of the pathway, the addition of cysteine to glucosamine malate (GlcN-Mal) to generate BSH. This is Putative cysteine ligase BshC from Bacillus anthracis (strain A0248).